We begin with the raw amino-acid sequence, 345 residues long: MEFLSKYTACLSNWGLNLEPGLQTVGAAVLLTTGTLFIASRVLTFVRVLLSLFVLPGKPLRSFGPKGSWAVVTGASDGLGKEFSLQLARAGFNIVLVSRTASKLTTLAEEITTKHSVQTKTLAMDYAANNDADYEELKAIVDGLDVAVLINNVGKSHDIPTPFALTPEDEMTDIVTINCLGTLRTTQLIIPGMMQRKRGLVLTMGSFGGLLPTPLLATYSGSKAFLQQWSTSLGSELEPYGITVELVQAYLITSAMSKVRRTSATIPDPRAFVKAVLSKIGRNGGSPGYAYSSSPYWSHGLMAWFLTCVMQPMGKLVVGQNKSMHEAIRKRALRKAEREKGKKST.

Residues 26-46 (GAAVLLTTGTLFIASRVLTFV) traverse the membrane as a helical segment. 8 residues coordinate NADP(+): valine 71, aspartate 125, aspartate 133, asparagine 152, tyrosine 219, lysine 223, isoleucine 252, and serine 254. Tyrosine 219 (proton donor) is an active-site residue. Lysine 223 acts as the Lowers pKa of active site Tyr in catalysis.

The protein belongs to the short-chain dehydrogenases/reductases (SDR) family.

It is found in the endoplasmic reticulum membrane. It carries out the reaction a very-long-chain (3R)-3-hydroxyacyl-CoA + NADP(+) = a very-long-chain 3-oxoacyl-CoA + NADPH + H(+). It participates in lipid metabolism; fatty acid biosynthesis. In terms of biological role, component of the microsomal membrane bound fatty acid elongation system, which produces the 26-carbon very long-chain fatty acids (VLCFA) from palmitate. Catalyzes the reduction of the 3-ketoacyl-CoA intermediate that is formed in each cycle of fatty acid elongation. VLCFAs serve as precursors for ceramide and sphingolipids. The chain is Very-long-chain 3-oxoacyl-CoA reductase from Aspergillus fumigatus (strain CBS 144.89 / FGSC A1163 / CEA10) (Neosartorya fumigata).